The following is a 293-amino-acid chain: Small ribosomal subunit biogenesis GTPase RsgA (293 aa).

The 161-residue stretch at 63–223 (QNELVRPPVA…VADTPGFSAL (161 aa)) folds into the CP-type G domain. GTP-binding positions include 112–115 (SKID) and 166–174 (GQSGVGKSS). Zn(2+) contacts are provided by C247, C252, H254, and C260.

This sequence belongs to the TRAFAC class YlqF/YawG GTPase family. RsgA subfamily. In terms of assembly, monomer. Associates with 30S ribosomal subunit, binds 16S rRNA. The cofactor is Zn(2+).

It localises to the cytoplasm. Its function is as follows. One of several proteins that assist in the late maturation steps of the functional core of the 30S ribosomal subunit. Helps release RbfA from mature subunits. May play a role in the assembly of ribosomal proteins into the subunit. Circularly permuted GTPase that catalyzes slow GTP hydrolysis, GTPase activity is stimulated by the 30S ribosomal subunit. The polypeptide is Small ribosomal subunit biogenesis GTPase RsgA (Geobacillus thermodenitrificans (strain NG80-2)).